Here is a 509-residue protein sequence, read N- to C-terminus: MDTETLCLITADSGKVYGILKAIFGDESEIVKKLIDFDVSIRVVPLNLGLLNIFRDNAADLDNADLMKRRFGNTMGSRIVEAYRRSQDSKYKRNVCKTTGLLVCLFGGGLGLSREADKHKKFVEGKSHNILSVEMLKRALSIGGQNVDANKISSFWFATYTIFTTVYSPRLRYQAGSSKRIIALSESRNQYRSNLFWDLRDDSSHEVMSMVHVLSALFASALTAYISTRVRHELTQGNDERESLNNVLVWLKTLTFEPSTIALIAYIWLVSPTDAQATITIGSVMESESSDDFPDIVKILSYTSNTMLPVQLLEDGRTAYCSVADGYTRHTTALTLITDYNSSHMSDKFGVLINIVKFEHAYALHYVHHKPRDGKEMTITSPSSEMMFTSVVVTPLSSYPLIHARNAVIDWLRTFVHMFPDSGSLVIPADSYTWIHNLAQDMFPWVQLSTTLDIRDDHYFQVLCDCLSLGRDSRNHAKVEKLIKYMKASVYNFTSEARGNMLLAITVYK.

It is found in the host cell junction. The protein localises to the host plasmodesma. Its subcellular location is the host cytoplasm. Functionally, transports viral genome to neighboring plant cells directly through plasmosdesmata, without any budding. The movement protein allows efficient cell to cell propagation, by bypassing the host cell wall barrier. The polypeptide is Movement protein (Rice dwarf virus (isolate Fujian) (RDV)).